The chain runs to 331 residues: Biotin synthase (331 aa).

Positions 53-271 constitute a Radical SAM core domain; the sequence is TELQLSQLLS…IAVARIVCPK (219 aa). [4Fe-4S] cluster contacts are provided by Cys-68, Cys-72, and Cys-75. 4 residues coordinate [2Fe-2S] cluster: Cys-112, Cys-143, Cys-203, and Arg-275.

Belongs to the radical SAM superfamily. Biotin synthase family. In terms of assembly, homodimer. [4Fe-4S] cluster serves as cofactor. The cofactor is [2Fe-2S] cluster.

It catalyses the reaction (4R,5S)-dethiobiotin + (sulfur carrier)-SH + 2 reduced [2Fe-2S]-[ferredoxin] + 2 S-adenosyl-L-methionine = (sulfur carrier)-H + biotin + 2 5'-deoxyadenosine + 2 L-methionine + 2 oxidized [2Fe-2S]-[ferredoxin]. The protein operates within cofactor biosynthesis; biotin biosynthesis; biotin from 7,8-diaminononanoate: step 2/2. In terms of biological role, catalyzes the conversion of dethiobiotin (DTB) to biotin by the insertion of a sulfur atom into dethiobiotin via a radical-based mechanism. The polypeptide is Biotin synthase (Phenylobacterium zucineum (strain HLK1)).